Consider the following 123-residue polypeptide: D-ribose pyranase (123 aa).

The active-site Proton donor is the His-20. Residues Asp-28, His-90, and 112–114 each bind substrate; that span reads YAN.

Belongs to the RbsD / FucU family. RbsD subfamily. In terms of assembly, homodecamer.

The protein localises to the cytoplasm. The catalysed reaction is beta-D-ribopyranose = beta-D-ribofuranose. It participates in carbohydrate metabolism; D-ribose degradation; D-ribose 5-phosphate from beta-D-ribopyranose: step 1/2. In terms of biological role, catalyzes the interconversion of beta-pyran and beta-furan forms of D-ribose. In Corynebacterium glutamicum (strain R), this protein is D-ribose pyranase.